We begin with the raw amino-acid sequence, 228 residues long: ATP synthase F(0) complex subunit a (228 aa).

The next 6 membrane-spanning stretches (helical) occupy residues 13–33, 70–90, 100–120, 140–160, 162–182, and 190–210; these read YFLG…TMFI, WALL…TGLL, LSLN…MGAT, APFL…ALGV, LTAN…ALIN, and LFLT…VSFI.

Belongs to the ATPase A chain family. In terms of assembly, component of the ATP synthase complex composed at least of ATP5F1A/subunit alpha, ATP5F1B/subunit beta, ATP5MC1/subunit c (homooctomer), MT-ATP6/subunit a, MT-ATP8/subunit 8, ATP5ME/subunit e, ATP5MF/subunit f, ATP5MG/subunit g, ATP5MK/subunit k, ATP5MJ/subunit j, ATP5F1C/subunit gamma, ATP5F1D/subunit delta, ATP5F1E/subunit epsilon, ATP5PF/subunit F6, ATP5PB/subunit b, ATP5PD/subunit d, ATP5PO/subunit OSCP. ATP synthase complex consists of a soluble F(1) head domain (subunits alpha(3) and beta(3)) - the catalytic core - and a membrane F(0) domain - the membrane proton channel (subunits c, a, 8, e, f, g, k and j). These two domains are linked by a central stalk (subunits gamma, delta, and epsilon) rotating inside the F1 region and a stationary peripheral stalk (subunits F6, b, d, and OSCP). Interacts with DNAJC30; interaction is direct.

It localises to the mitochondrion inner membrane. It carries out the reaction H(+)(in) = H(+)(out). In terms of biological role, subunit a, of the mitochondrial membrane ATP synthase complex (F(1)F(0) ATP synthase or Complex V) that produces ATP from ADP in the presence of a proton gradient across the membrane which is generated by electron transport complexes of the respiratory chain. ATP synthase complex consist of a soluble F(1) head domain - the catalytic core - and a membrane F(1) domain - the membrane proton channel. These two domains are linked by a central stalk rotating inside the F(1) region and a stationary peripheral stalk. During catalysis, ATP synthesis in the catalytic domain of F(1) is coupled via a rotary mechanism of the central stalk subunits to proton translocation. With the subunit c (ATP5MC1), forms the proton-conducting channel in the F(0) domain, that contains two crucial half-channels (inlet and outlet) that facilitate proton movement from the mitochondrial intermembrane space (IMS) into the matrix. Protons are taken up via the inlet half-channel and released through the outlet half-channel, following a Grotthuss mechanism. The protein is ATP synthase F(0) complex subunit a of Myxine glutinosa (Atlantic hagfish).